The sequence spans 96 residues: NADH-quinone oxidoreductase subunit K (96 aa).

Transmembrane regions (helical) follow at residues 1-21 (MNYI…VLVR), 25-45 (IIVF…FVAF), and 56-76 (VIAF…LAII).

Belongs to the complex I subunit 4L family. NDH-1 is composed of 14 different subunits. Subunits NuoA, H, J, K, L, M, N constitute the membrane sector of the complex.

It localises to the cell membrane. The enzyme catalyses a quinone + NADH + 5 H(+)(in) = a quinol + NAD(+) + 4 H(+)(out). NDH-1 shuttles electrons from NADH, via FMN and iron-sulfur (Fe-S) centers, to quinones in the respiratory chain. The immediate electron acceptor for the enzyme in this species is believed to be a menaquinone. Couples the redox reaction to proton translocation (for every two electrons transferred, four hydrogen ions are translocated across the cytoplasmic membrane), and thus conserves the redox energy in a proton gradient. The sequence is that of NADH-quinone oxidoreductase subunit K from Thermobifida fusca (strain YX).